The primary structure comprises 212 residues: Small ribosomal subunit protein uS19m (212 aa).

The transit peptide at 1-29 directs the protein to the mitochondrion; the sequence is MAFCTKLGGHWKQGVNVPVSSMLGSLRYM. An RRM domain is found at 31-109; it reads TKLYIGGLSP…FNISVNVAKD (79 aa).

The protein belongs to the universal ribosomal protein uS19 family. As to quaternary structure, component of the mitochondrial ribosome small subunit.

The protein resides in the mitochondrion. The RNA-binding domain found in RPS19 may functionally replace the missing mitochondrial RPS13. This Arabidopsis thaliana (Mouse-ear cress) protein is Small ribosomal subunit protein uS19m (RPS19).